A 157-amino-acid polypeptide reads, in one-letter code: Ribosome-binding factor A (157 aa).

Positions 126 to 157 (RARATAQYAGDADPYKHDDEPSDDFEDDSDEE) are disordered. Acidic residues predominate over residues 145 to 157 (EPSDDFEDDSDEE).

Belongs to the RbfA family. As to quaternary structure, monomer. Binds 30S ribosomal subunits, but not 50S ribosomal subunits or 70S ribosomes.

The protein resides in the cytoplasm. Functionally, one of several proteins that assist in the late maturation steps of the functional core of the 30S ribosomal subunit. Associates with free 30S ribosomal subunits (but not with 30S subunits that are part of 70S ribosomes or polysomes). Required for efficient processing of 16S rRNA. May interact with the 5'-terminal helix region of 16S rRNA. This is Ribosome-binding factor A from Bifidobacterium longum (strain DJO10A).